Here is a 435-residue protein sequence, read N- to C-terminus: 3-phosphoshikimate 1-carboxyvinyltransferase (435 aa).

The 3-phosphoshikimate site is built by lysine 15, serine 16, and arginine 20. Lysine 15 is a phosphoenolpyruvate binding site. Residues glycine 96 and arginine 124 each coordinate phosphoenolpyruvate. Serine 169, glutamine 171, threonine 195, aspartate 319, and lysine 346 together coordinate 3-phosphoshikimate. Glutamine 171 contributes to the phosphoenolpyruvate binding site. Catalysis depends on aspartate 319, which acts as the Proton acceptor. The phosphoenolpyruvate site is built by arginine 350 and arginine 394.

This sequence belongs to the EPSP synthase family. As to quaternary structure, monomer.

It localises to the cytoplasm. The enzyme catalyses 3-phosphoshikimate + phosphoenolpyruvate = 5-O-(1-carboxyvinyl)-3-phosphoshikimate + phosphate. It functions in the pathway metabolic intermediate biosynthesis; chorismate biosynthesis; chorismate from D-erythrose 4-phosphate and phosphoenolpyruvate: step 6/7. In terms of biological role, catalyzes the transfer of the enolpyruvyl moiety of phosphoenolpyruvate (PEP) to the 5-hydroxyl of shikimate-3-phosphate (S3P) to produce enolpyruvyl shikimate-3-phosphate and inorganic phosphate. This chain is 3-phosphoshikimate 1-carboxyvinyltransferase, found in Chloroherpeton thalassium (strain ATCC 35110 / GB-78).